A 349-amino-acid polypeptide reads, in one-letter code: ATPase GET3 (349 aa).

27–34 (KGGVGKTT) serves as a coordination point for ATP. The active site involves Asp-58. Residues Glu-240 and Asn-267 each coordinate ATP. Residues Cys-280 and Cys-283 each coordinate Zn(2+).

The protein belongs to the arsA ATPase family. As to quaternary structure, homodimer. Component of the Golgi to ER traffic (GET) complex, which is composed of GET1, GET2 and GET3. Within the complex, GET1 and GET2 form a heterotetramer which is stabilized by phosphatidylinositol binding and which binds to the GET3 homodimer. Interacts with the chloride channel protein GEF1.

The protein resides in the cytoplasm. It is found in the endoplasmic reticulum. Its subcellular location is the golgi apparatus. ATPase required for the post-translational delivery of tail-anchored (TA) proteins to the endoplasmic reticulum. Recognizes and selectively binds the transmembrane domain of TA proteins in the cytosol. This complex then targets to the endoplasmic reticulum by membrane-bound receptors GET1 and GET2, where the tail-anchored protein is released for insertion. This process is regulated by ATP binding and hydrolysis. ATP binding drives the homodimer towards the closed dimer state, facilitating recognition of newly synthesized TA membrane proteins. ATP hydrolysis is required for insertion. Subsequently, the homodimer reverts towards the open dimer state, lowering its affinity for the GET1-GET2 receptor, and returning it to the cytosol to initiate a new round of targeting. Cooperates with the HDEL receptor ERD2 to mediate the ATP-dependent retrieval of resident ER proteins that contain a C-terminal H-D-E-L retention signal from the Golgi to the ER. Involved in low-level resistance to the oxyanions arsenite and arsenate, and in heat tolerance. This chain is ATPase GET3, found in Eremothecium gossypii (strain ATCC 10895 / CBS 109.51 / FGSC 9923 / NRRL Y-1056) (Yeast).